Consider the following 426-residue polypeptide: Histidine--tRNA ligase (426 aa).

It belongs to the class-II aminoacyl-tRNA synthetase family. Homodimer.

The protein localises to the cytoplasm. The catalysed reaction is tRNA(His) + L-histidine + ATP = L-histidyl-tRNA(His) + AMP + diphosphate + H(+). The protein is Histidine--tRNA ligase of Pseudoalteromonas atlantica (strain T6c / ATCC BAA-1087).